A 294-amino-acid chain; its full sequence is Elongation factor Ts (294 aa).

Positions 79–82 (TDFV) are involved in Mg(2+) ion dislocation from EF-Tu.

The protein belongs to the EF-Ts family.

It localises to the cytoplasm. Functionally, associates with the EF-Tu.GDP complex and induces the exchange of GDP to GTP. It remains bound to the aminoacyl-tRNA.EF-Tu.GTP complex up to the GTP hydrolysis stage on the ribosome. The sequence is that of Elongation factor Ts from Geobacillus sp. (strain WCH70).